The following is a 625-amino-acid chain: MSETTKSGSKKSGQTSRRAIHSCLACRRKKLKCDHGRPCSNCLKRSTIQSCIYIDPGKTNYDKRFERGSEADELIDQLLSRVSMLEKRLNEVGTKSQSDYENQQSHNLPSTPSADAETQRNIGSLSVLDDTKSQYANYSSSSHVLWHLRNYHYLNLDQDIQEENDSLISPFFFRISPNESAYDYLPPKKVSDILIEQFFFRCHMLINVLHRPTFYVRYNDFWEKPHLRKPAFTSLLYAIYASALLATPVEVQKTWALGEDERYLQVDYHQAFRYALASSNFLFEPDLNALQALVLCQVVFDSDRIRAPPSLVGLILHVALCMGLHRDGSLYGLNPVISEIRRRVWANIVLSDLRTSETIGYPPQIVEGNYDTRLPSALPDEIHNVDSSVIISEATFVNIITKVSRAYSKCLKVLLGIIAPNYTRLLELDRELSNFFKELIEVNIPTSNTMHERHIRLLVSYLSNRFPILLHFPFLLKKNSAQFAYSHSRALESATLALNQLYELGSNPEYSKYSWYLWRYPPFHPCIVLLLDLLNSQKIIYLDDERVVLLNKIFSLFPRSSGKEHYQKAWALLQTSRAKVWEKLGLSTVDVSTTDVRLTNFEFFDANNLDINWDDWDAIFQHCPF.

Residues 23-51 (CLACRRKKLKCDHGRPCSNCLKRSTIQSC) constitute a DNA-binding region (zn(2)-C6 fungal-type). Residues 93–113 (GTKSQSDYENQQSHNLPSTPS) show a composition bias toward polar residues. The disordered stretch occupies residues 93–119 (GTKSQSDYENQQSHNLPSTPSADAETQ).

It localises to the nucleus. The protein resides in the cytoplasm. It is found in the cytoskeleton. The protein localises to the spindle. This is an uncharacterized protein from Schizosaccharomyces pombe (strain 972 / ATCC 24843) (Fission yeast).